The following is a 212-amino-acid chain: Thiamine-phosphate synthase (212 aa).

Residues 35 to 39 (QLRDK) and N67 each bind 4-amino-2-methyl-5-(diphosphooxymethyl)pyrimidine. D68 and D87 together coordinate Mg(2+). Position 106 (S106) interacts with 4-amino-2-methyl-5-(diphosphooxymethyl)pyrimidine. A 2-[(2R,5Z)-2-carboxy-4-methylthiazol-5(2H)-ylidene]ethyl phosphate-binding site is contributed by 132–134 (TGS). K135 lines the 4-amino-2-methyl-5-(diphosphooxymethyl)pyrimidine pocket. Residues G163 and 183–184 (IS) each bind 2-[(2R,5Z)-2-carboxy-4-methylthiazol-5(2H)-ylidene]ethyl phosphate.

Belongs to the thiamine-phosphate synthase family. It depends on Mg(2+) as a cofactor.

The catalysed reaction is 2-[(2R,5Z)-2-carboxy-4-methylthiazol-5(2H)-ylidene]ethyl phosphate + 4-amino-2-methyl-5-(diphosphooxymethyl)pyrimidine + 2 H(+) = thiamine phosphate + CO2 + diphosphate. It catalyses the reaction 2-(2-carboxy-4-methylthiazol-5-yl)ethyl phosphate + 4-amino-2-methyl-5-(diphosphooxymethyl)pyrimidine + 2 H(+) = thiamine phosphate + CO2 + diphosphate. It carries out the reaction 4-methyl-5-(2-phosphooxyethyl)-thiazole + 4-amino-2-methyl-5-(diphosphooxymethyl)pyrimidine + H(+) = thiamine phosphate + diphosphate. It participates in cofactor biosynthesis; thiamine diphosphate biosynthesis; thiamine phosphate from 4-amino-2-methyl-5-diphosphomethylpyrimidine and 4-methyl-5-(2-phosphoethyl)-thiazole: step 1/1. Condenses 4-methyl-5-(beta-hydroxyethyl)thiazole monophosphate (THZ-P) and 2-methyl-4-amino-5-hydroxymethyl pyrimidine pyrophosphate (HMP-PP) to form thiamine monophosphate (TMP). In Methanocella arvoryzae (strain DSM 22066 / NBRC 105507 / MRE50), this protein is Thiamine-phosphate synthase.